Reading from the N-terminus, the 591-residue chain is Mono(ADP-ribosyl)transferase SpvB (591 aa).

The TR mART core domain maps to 373–576 (PMMGGNSSRP…LRLSDDATAD (204 aa)). Residues Arg414 and 471 to 477 (RGLKLDK) each bind NAD(+). Catalysis depends on residues Arg471, Ser501, and Glu538. Glu538 lines the NAD(+) pocket.

This sequence belongs to the SpvB family.

The protein resides in the secreted. The enzyme catalyses L-arginyl-[protein] + NAD(+) = N(omega)-(ADP-D-ribosyl)-L-arginyl-[protein] + nicotinamide + H(+). Its activity is regulated as follows. Inhibited by novobiocin. Functionally, mono-ADP-ribosylates eukaryotic muscle and non-muscle actin on 'Arg-177'. ADP-ribosylates all actins tested, has more activity on nonmuscle beta/gamma-actin than on muscle alpha-actin. Prefers monomeric G-actin but can weakly ADP-ribosylate F-actin. ADP-ribosylation prevents the polymerization of G-actin to F-actin, causing actin filament depolymerization, destruction of the cytoskeleton and cytotoxicity. Does not possess NAD(+)-glycohydrolase activity, unlike most mART enzymes. This is Mono(ADP-ribosyl)transferase SpvB (spvB) from Salmonella typhimurium.